The chain runs to 84 residues: UPF0297 protein Csac_1773 (84 aa).

This sequence belongs to the UPF0297 family.

This Caldicellulosiruptor saccharolyticus (strain ATCC 43494 / DSM 8903 / Tp8T 6331) protein is UPF0297 protein Csac_1773.